The sequence spans 864 residues: Dynamin-1 (864 aa).

Residues 28-294 (DLDLPQIAVV…LTNHIRDTLP (267 aa)) enclose the Dynamin-type G domain. The segment at 38–45 (GGQSAGKS) is G1 motif. Positions 41, 43, 44, 45, 46, 59, and 60 each coordinate GDP. Positions 64-66 (VTR) are G2 motif. Residue Tyr80 is modified to Phosphotyrosine. Position 125 is a 3'-nitrotyrosine; alternate (Tyr125). Residue Tyr125 is modified to Phosphotyrosine; alternate. Residues 136–139 (DLPG) are G3 motif. The interval 205 to 208 (TKLD) is G4 motif. Lys206, Asp208, Asp211, Asn236, Arg237, and Gln239 together coordinate GDP. The interval 235-238 (VNRS) is G5 motif. 2 positions are modified to phosphoserine: Ser306 and Ser347. The residue at position 354 (Tyr354) is a Phosphotyrosine. Ser512 bears the Phosphoserine mark. The 107-residue stretch at 519–625 (LVIRKGWLTI…WKASFLRAGV (107 aa)) folds into the PH domain. Residues 659-750 (VETIRNLVDS…IIGDINTTTV (92 aa)) form the GED domain. Residues 767 to 864 (SVPAGRRSPT…PESPRPPFDL (98 aa)) are disordered. Ser774 bears the Phosphoserine; by GSK3-beta mark. Ser778 is modified (phosphoserine). Arg796 carries the post-translational modification Omega-N-methylarginine. Ser822 carries the phosphoserine modification. Pro residues predominate over residues 825 to 843 (PFGPPPQVPSRPNRAPPGV). Phosphoserine is present on residues Ser851 and Ser857.

Belongs to the TRAFAC class dynamin-like GTPase superfamily. Dynamin/Fzo/YdjA family. Homodimer; homodimerization is mediated by the dynamin-type G domain which promotes assembly-stimulated GTPase activity. Homo-tetramer formed from two dimers in the absence of lipid. Oligomerizes into a helical polymer that self-assembles around the vesicle membrane, when associated to the menbrane through lipid binding. Interacts (via C-terminal proline-rich domain (PRD)) with SNX9 (via SH3 domain); this interaction allows regulation of DNM1 self-assembly during late stages of endocytic vesicle formation and supports DNM1's early functions in accelerating clathrin-coated pits (CCPs) maturation in non neuronals cell. Interacts (via C-terminal proline-rich domain (PRD)) with MYO1E (via SH3 domain); this interaction regulates receptor-mediated endocytosis. Interacts with SNX33 (via SH3 domain); this interaction decreases DNM1-dependent endocytosis. Interacts with DIAPH1. Interacts with GRB2 (via SH3 domain); this interaction mediates disassembly of DNM1 polymers, therefore modulates self-assembly. Forms a complex with BIN1 (via SH3 domain) and SH3GL2 (via SH3 domain). Forms a complex with SH3GL2 (via SH3 domain) and AMPH (via SH3 domain). Forms a complex with SH3GL2 (via SH3 domain) and SYNJ1. Interacts with AMPH. Interacts (via C-terminal proline-rich domain (PRD)) with SYT1; this interaction facilitates vesicle fission during clathrin-mediated endocytosis (CME). Interacts (via C-terminal proline-rich domain (PRD)) with PLCG1 (via SH3 domain); this interaction stimulates the release of GDP from DNM1 and enhances DNM1-dependent endocytosis. Interacts with SNPH; this interaction inhibits the binding of DNM1 to AMPH and DNM1-receptor-mediated endocytosis. Interacts with CAV1. Interacts with SH3GLB1 (via SH3 domain). Interacts with PACSIN1 (via SH3 domain), PACSIN2 (via SH3 domain) and PACSIN3 (via SH3 domain). Interacts with UNC119; this interaction decreases DNM1's GTPase activity and affects DNM1's interaction with AMPH. Interacts (GTP-bound form) with DNAJC6; this interaction allows clathrin-coated vesicle (CCV) formation at the plasma membrane. In terms of processing, phosphorylation at Ser-774 by GSK3B/GSK3-beta leads to inactivation of receptor-mediated endocytosis in non-neuronal cells. Dephosphorylation at Ser-774, through the EGFR downstream signaling, leads to activation and regulates early stages of clathrin-mediated endocytosis (CME). Phosphorylated by CDK5 leading to synaptic vesicle endocytosis (SVE) activation.

It localises to the cell membrane. The protein resides in the membrane. The protein localises to the clathrin-coated pit. Its subcellular location is the cytoplasmic vesicle. It is found in the presynapse. It localises to the secretory vesicle. The protein resides in the chromaffin granule. It catalyses the reaction GTP + H2O = GDP + phosphate + H(+). Its activity is regulated as follows. GTPase activity is activated by 1-phosphatidyl-1D-myo-inositol 4,5-bisphosphate. GTPase activity is inhibited by the heterodimer G protein formed by GNB1 and GNG2 with an IC(50)=400 nM when DNM1 concentration is 5 nM. Its function is as follows. Catalyzes the hydrolysis of GTP and utilizes this energy to mediate vesicle scission and participates in many forms of endocytosis, such as clathrin-mediated endocytosis or synaptic vesicle endocytosis as well as rapid endocytosis (RE). Associates to the membrane, through lipid binding, and self-assembles into rings and stacks of interconnected rings through oligomerization to form a helical polymer around the vesicle membrane leading to constriction of invaginated coated pits around their necks. Self-assembly of the helical polymer induces membrane tubules narrowing until the polymer reaches a length sufficient to trigger GTP hydrolysis. Depending on the curvature imposed on the tubules, membrane detachment from the helical polymer upon GTP hydrolysis can cause spontaneous hemifission followed by complete fission. May play a role in regulating early stages of clathrin-mediated endocytosis in non-neuronal cells through its activation by dephosphorylation via the signaling downstream of EGFR. Controls vesicle size at a step before fission, during formation of membrane pits, at hippocampal synapses. Controls plastic adaptation of the synaptic vesicle recycling machinery to high levels of activity. Mediates rapid endocytosis (RE), a Ca(2+)-dependent and clathrin- and K(+)-independent process in chromaffin cells. Microtubule-associated force-producing protein involved in producing microtubule bundles and able to bind and hydrolyze GTP. Through its interaction with DNAJC6, acts during the early steps of clathrin-coated vesicle (CCV) formation. The polypeptide is Dynamin-1 (Homo sapiens (Human)).